The following is a 245-amino-acid chain: DNA polymerase sliding clamp 2 (245 aa).

Belongs to the PCNA family. Forms homodimers with PCNA1, which then recruit PCNA3; does not form homotrimers. The heterodimers interact with RfcS homotetramers. Heterotrimer which circularizes head-to-tail (head is at N-terminus, tail is at C-terminus) to form a toroid; DNA passes through its center. Replication factor C (RFC) is required to load the toroid on the DNA. This subunit interacts with DNA polymerase I (dpo1). The heterotrimer also interacts with flap endonuclease 1, DNA ligase and XPF via the other subunits.

Functionally, one of the sliding clamp subunits that acts as a moving platform for DNA processing. Responsible for tethering the catalytic subunit of DNA polymerase to DNA during high-speed replication. Heterotrimer stimulates the Holliday junction resolvase Hjc. DNA polymerase I, DNA ligase and the flap endonuclease may be constitutively associated with the PCNA heterotrimer forming a scanning complex able to couple DNA synthesis and Okazaki fragment maturation. The sequence is that of DNA polymerase sliding clamp 2 from Saccharolobus solfataricus (strain ATCC 35092 / DSM 1617 / JCM 11322 / P2) (Sulfolobus solfataricus).